The chain runs to 272 residues: Ethanolamine ammonia-lyase small subunit (272 aa).

Valine 161, glutamate 182, and cysteine 211 together coordinate adenosylcob(III)alamin.

This sequence belongs to the EutC family. The basic unit is a heterodimer which dimerizes to form tetramers. The heterotetramers trimerize; 6 large subunits form a core ring with 6 small subunits projecting outwards. It depends on adenosylcob(III)alamin as a cofactor.

It localises to the bacterial microcompartment. It carries out the reaction ethanolamine = acetaldehyde + NH4(+). The protein operates within amine and polyamine degradation; ethanolamine degradation. In terms of biological role, catalyzes the deamination of various vicinal amino-alcohols to oxo compounds. Allows this organism to utilize ethanolamine as the sole source of nitrogen and carbon in the presence of external vitamin B12. The sequence is that of Ethanolamine ammonia-lyase small subunit from Pseudomonas putida (strain ATCC 47054 / DSM 6125 / CFBP 8728 / NCIMB 11950 / KT2440).